We begin with the raw amino-acid sequence, 178 residues long: 5,6,7,8-tetrahydromethanopterin hydro-lyase (178 aa).

The active-site Proton donor is the H33. Substrate is bound by residues D35, L64, K82, T84, and Q99.

This sequence belongs to the formaldehyde-activating enzyme family.

It is found in the cytoplasm. The catalysed reaction is 5,6,7,8-tetrahydromethanopterin + formaldehyde = 5,10-methylenetetrahydromethanopterin + H2O. Catalyzes the condensation of formaldehyde with tetrahydromethanopterin (H(4)MPT) to 5,10-methylenetetrahydromethanopterin. The protein is 5,6,7,8-tetrahydromethanopterin hydro-lyase (faeA) of Methanosarcina barkeri (strain Fusaro / DSM 804).